The sequence spans 247 residues: Sugar fermentation stimulation protein homolog (247 aa).

This sequence belongs to the SfsA family.

In Methylorubrum populi (strain ATCC BAA-705 / NCIMB 13946 / BJ001) (Methylobacterium populi), this protein is Sugar fermentation stimulation protein homolog.